Consider the following 196-residue polypeptide: MLNLQAKLNEKKVPLLTNFPTPTSSLNNLNLFSLPLVKKKMSFKKMMKYILKTIFKPIFMACGCGSTVPPSSHSHYTPGPPVSPTVLRSPCPKIDESVAMAKESINPFEDYKKSMNQMIEERYIETESELKELLRCFLDINPSPQHNLIVRAFVDVCSHLQPPHDRRGKSLGRLLRLYVNNPLDNNDDDSHQTSSK.

The OVATE domain occupies 100 to 159 (MAKESINPFEDYKKSMNQMIEERYIETESELKELLRCFLDINPSPQHNLIVRAFVDVCSH).

Expressed in roots, cauline leaves, shoots, stems, flower buds and siliques.

Its subcellular location is the nucleus. In terms of biological role, transcriptional repressor that may regulate multiple aspects of plant growth and development through the regulation of BEL1-LIKE (BLH) and KNOX TALE (KNAT) homeodomain transcription factors. This Arabidopsis thaliana (Mouse-ear cress) protein is Transcription repressor OFP10 (OFP10).